Reading from the N-terminus, the 365-residue chain is Histidinol-phosphate aminotransferase (365 aa).

Position 220 is an N6-(pyridoxal phosphate)lysine (lysine 220).

Belongs to the class-II pyridoxal-phosphate-dependent aminotransferase family. Histidinol-phosphate aminotransferase subfamily. Homodimer. Requires pyridoxal 5'-phosphate as cofactor.

It catalyses the reaction L-histidinol phosphate + 2-oxoglutarate = 3-(imidazol-4-yl)-2-oxopropyl phosphate + L-glutamate. It participates in amino-acid biosynthesis; L-histidine biosynthesis; L-histidine from 5-phospho-alpha-D-ribose 1-diphosphate: step 7/9. This chain is Histidinol-phosphate aminotransferase (hisC), found in Xylella fastidiosa (strain Temecula1 / ATCC 700964).